Consider the following 395-residue polypeptide: Alanine racemase 2 (395 aa).

The active-site Proton acceptor; specific for D-alanine is Lys-60. Lys-60 carries the post-translational modification N6-(pyridoxal phosphate)lysine. Arg-158 contacts substrate. Catalysis depends on Tyr-288, which acts as the Proton acceptor; specific for L-alanine. Met-332 is a binding site for substrate.

This sequence belongs to the alanine racemase family. Pyridoxal 5'-phosphate serves as cofactor.

The catalysed reaction is L-alanine = D-alanine. It participates in amino-acid biosynthesis; D-alanine biosynthesis; D-alanine from L-alanine: step 1/1. In terms of biological role, catalyzes the interconversion of L-alanine and D-alanine. May also act on other amino acids. This is Alanine racemase 2 (alr2) from Clostridium acetobutylicum (strain ATCC 824 / DSM 792 / JCM 1419 / IAM 19013 / LMG 5710 / NBRC 13948 / NRRL B-527 / VKM B-1787 / 2291 / W).